The sequence spans 350 residues: Protein RecA (350 aa).

80 to 87 lines the ATP pocket; the sequence is GPESSGKT.

The protein belongs to the RecA family.

It localises to the cytoplasm. Its function is as follows. Can catalyze the hydrolysis of ATP in the presence of single-stranded DNA, the ATP-dependent uptake of single-stranded DNA by duplex DNA, and the ATP-dependent hybridization of homologous single-stranded DNAs. It interacts with LexA causing its activation and leading to its autocatalytic cleavage. This Chlorobium limicola (strain DSM 245 / NBRC 103803 / 6330) protein is Protein RecA.